Here is an 86-residue protein sequence, read N- to C-terminus: Small ribosomal subunit protein bS20 (86 aa).

The protein belongs to the bacterial ribosomal protein bS20 family.

In terms of biological role, binds directly to 16S ribosomal RNA. The polypeptide is Small ribosomal subunit protein bS20 (Rhodococcus erythropolis (strain PR4 / NBRC 100887)).